The chain runs to 538 residues: Carboxypeptidase 2 (538 aa).

Residues 1 to 21 form the signal peptide; sequence MVAYRFLTLISLGLGSHCASA. The N-linked (GlcNAc...) asparagine glycan is linked to N46. The interval 53-76 is disordered; the sequence is PAFTSPGTVPRGFSDGTSGPTRDE. One can recognise a Peptidase M14 domain in the interval 71-351; sequence GPTRDETMEG…VMVKSILQTA (281 aa). 3 residues coordinate Zn(2+): H136, E139, and H224. The Proton donor/acceptor role is filled by E322. Residues N393 and N459 are each glycosylated (N-linked (GlcNAc...) asparagine).

The protein belongs to the peptidase M14 family. It depends on Zn(2+) as a cofactor.

The protein resides in the secreted. Extracellular metalloprotease that contributes to pathogenicity. The sequence is that of Carboxypeptidase 2 (MCPB) from Trichophyton tonsurans (Scalp ringworm fungus).